Consider the following 155-residue polypeptide: Molybdopterin synthase catalytic subunit 1 (155 aa).

Residues 101 to 102 (HR), Lys117, and 124 to 126 (KKE) each bind substrate.

This sequence belongs to the MoaE family. MOCS2B subfamily. In terms of assembly, heterotetramer; composed of 2 small (MOCS2A) and 2 large (MOCS2B) subunits.

It is found in the cytoplasm. The enzyme catalyses 2 [molybdopterin-synthase sulfur-carrier protein]-C-terminal-Gly-aminoethanethioate + cyclic pyranopterin phosphate + H2O = molybdopterin + 2 [molybdopterin-synthase sulfur-carrier protein]-C-terminal Gly-Gly + 2 H(+). Its pathway is cofactor biosynthesis; molybdopterin biosynthesis. Catalytic subunit of the molybdopterin synthase complex, a complex that catalyzes the conversion of precursor Z into molybdopterin. Acts by mediating the incorporation of 2 sulfur atoms from thiocarboxylated MOCS2A into precursor Z to generate a dithiolene group. The polypeptide is Molybdopterin synthase catalytic subunit 1 (Aedes aegypti (Yellowfever mosquito)).